The sequence spans 428 residues: Glutamine synthetase, chloroplastic (428 aa).

Residues 1–48 (MAQAVVPAMQCQVGAVRARPAAAAAAAGGRVWGVRRTGRGTSGFRVMA) constitute a chloroplast transit peptide. Residues 75–155 (IIAEYIWVGG…VMCDTYTPAG (81 aa)) enclose the GS beta-grasp domain. The interval 95-120 (TISKPVEDPSELPKWNYDGSSTGQAP) is disordered. The GS catalytic domain maps to 159–428 (PTNKRNRAAQ…LAAKKLALKV (270 aa)).

This sequence belongs to the glutamine synthetase family. Homooctamer.

Its subcellular location is the plastid. The protein resides in the chloroplast. It catalyses the reaction L-glutamate + NH4(+) + ATP = L-glutamine + ADP + phosphate + H(+). Light-modulated chloroplastic glutamine synthetase, encoded by a nuclear gene and expressed primarily in leaves, and which is responsible for the reassimilation of the ammonia generated by photorespiration. The chain is Glutamine synthetase, chloroplastic from Oryza sativa subsp. japonica (Rice).